The following is a 908-amino-acid chain: Glutamate receptor ionotropic, kainate 2 (908 aa).

The first 31 residues, 1–31 (MKIISPVLSNLVFSRSIKVLLCLLWIGYSQG), serve as a signal peptide directing secretion. The Extracellular portion of the chain corresponds to 32–561 (TTHVLRFGGI…VFSFLNPLSP (530 aa)). Residues Asn-67, Asn-73, Asn-275, Asn-378, Asn-412, Asn-423, and Asn-430 are each glycosylated (N-linked (GlcNAc...) asparagine). Cys-96 and Cys-347 are disulfide-bonded. L-glutamate is bound by residues Pro-516, Ala-518, and Arg-523. An N-linked (GlcNAc...) asparagine glycan is attached at Asn-546. The helical transmembrane segment at 562–582 (DIWMYILLAYLGVSCVLFVIA) threads the bilayer. Topologically, residues 583-638 (RFSPYEWYNPHPCNPDSDVVENNFTLLNSFWFGVGALMQQGSELMPKALSTRIVGG) are cytoplasmic. The chain crosses the membrane as a helical span at residues 639 to 659 (IWWFFTLIIISSYTANLAAFL). Topologically, residues 660–819 (TVERMESPID…KEASALGVQN (160 aa)) are extracellular. Residues Ala-689, Thr-690, and Glu-738 each coordinate L-glutamate. A disulfide bond links Cys-750 and Cys-804. N-linked (GlcNAc...) asparagine glycosylation is present at Asn-751. The chain crosses the membrane as a helical span at residues 820 to 840 (IGGIFIVLAAGLVLSVFVAVG). The Cytoplasmic portion of the chain corresponds to 841-908 (EFLYKSKKNA…RRLPGKETMA (68 aa)). 2 positions are modified to phosphoserine; by PKC: Ser-846 and Ser-868. Lys-886 participates in a covalent cross-link: Glycyl lysine isopeptide (Lys-Gly) (interchain with G-Cter in SUMO1).

Belongs to the glutamate-gated ion channel (TC 1.A.10.1) family. GRIK2 subfamily. Homotetramer and heterotetramer with GRIK5. Tetramers may be formed by the dimerization of dimers. Assembles into a kainate-gated homomeric channel that does not bind AMPA. Can form functional heteromeric receptors with GRIK3. Forms a heteromeric complex with GRIK4 and GRIK5. Interacts with DLG4. Interacts (via C-terminus) with KLHL17 (via kelch repeats); the interaction targets GRIK2 for degradation via ubiquitin-proteasome pathway. Interacts with NETO2. Post-translationally, sumoylation mediates kainate receptor-mediated endocytosis and regulates synaptic transmission. Sumoylation is enhanced by PIAS3 and desumoylated by SENP1. Ubiquitinated. Ubiquitination regulates the GRIK2 levels at the synapse by leading kainate receptor degradation through proteasome. In terms of processing, phosphorylated by PKC at Ser-868 upon agonist activation, this directly enhance sumoylation. Expressed in the hippocampal mossy fiber synapses (at protein level). Most abundant in the cerebellum and the hypothalamus. Expressed in a proportion of dorsal root ganglion (DRG) neurons (13.6%); predominantly small diameter DRG neurons (75%) with the remainder expressed in medium diameter DRG neurons.

It localises to the cell membrane. The protein resides in the postsynaptic cell membrane. It carries out the reaction Ca(2+)(in) = Ca(2+)(out). It catalyses the reaction Na(+)(in) = Na(+)(out). With respect to regulation, cold receptor activity activated by temperatures between 10-19 degrees Celsius. Ionotropic glutamate receptor that functions as a cation-permeable ligand-gated ion channel, gated by L-glutamate and the glutamatergic agonist kainic acid. L-glutamate acts as an excitatory neurotransmitter at many synapses in the central nervous system. Binding of the excitatory neurotransmitter L-glutamate induces a conformation change, leading to the opening of the cation channel, and thereby converts the chemical signal to an electrical impulse. The receptor then desensitizes rapidly and enters a transient inactive state, characterized by the presence of bound agonist. Modulates cell surface expression of NETO2. In association with GRIK3, involved in presynaptic facilitation of glutamate release at hippocampal mossy fiber synapses. In terms of biological role, independent of its ionotropic glutamate receptor activity, acts as a thermoreceptor conferring sensitivity to cold temperatures. Functions in dorsal root ganglion neurons. Functionally, ionotropic glutamate receptor that functions as a cation-permeable ligand-gated ion channel, gated by L-glutamate and the glutamatergic agonist kainic acid. The chain is Glutamate receptor ionotropic, kainate 2 (Grik2) from Mus musculus (Mouse).